A 313-amino-acid chain; its full sequence is Transcription initiation factor IIB 2 (313 aa).

The TFIIB-type zinc-finger motif lies at 13–44 (APKRCPECHSEHLIRDYEHGELICADCGAVIE). Zn(2+)-binding residues include Cys-17, Cys-20, Cys-36, and Cys-39. A run of 2 repeats spans residues 130–213 (QLLN…AKEL) and 224–305 (SYIA…EISK).

It belongs to the TFIIB family.

In terms of biological role, stabilizes TBP binding to an archaeal box-A promoter. Also responsible for recruiting RNA polymerase II to the pre-initiation complex (DNA-TBP-TFIIB). The polypeptide is Transcription initiation factor IIB 2 (Thermoplasma volcanium (strain ATCC 51530 / DSM 4299 / JCM 9571 / NBRC 15438 / GSS1)).